Reading from the N-terminus, the 574-residue chain is FAD-linked oxidoreductase sor8 (574 aa).

An N-terminal signal peptide occupies residues 1 to 27 (MYAPPFVRAFGIAVLAVLPSFSSPATA). N58, N112, N136, N266, N312, N363, and N384 each carry an N-linked (GlcNAc...) asparagine glycan. One can recognise an FAD-binding PCMH-type domain in the interval 126–305 (VIGTYVQYAV…YSMTVKAHAN (180 aa)).

It belongs to the oxygen-dependent FAD-linked oxidoreductase family. FAD serves as cofactor.

It functions in the pathway secondary metabolite biosynthesis. In terms of biological role, FAD-linked oxidoreductase; part of the SOR gene cluster that mediates the biosynthesis of sorbicillinoids, a diverse group of yellow secondary metabolites that restrict growth of competing pathogenic fungi but not of bacteria. Sorbicillinoids biosynthesis requires the action of two PKSs. The SOR cluster is required for the production of trichodimerol and dihydrotrichotetronin, with sor2 being sufficient for production of trichodimerol, but not dihydrotrichotetronin in the light. Sor1 iteratively combines three acetyl units and the growing chain is modified by the ketoacyl reductase subunit, and optional by the enoyl reductase subunit in the second cycle. The polyketide is then handed over to the PKS sor2, which adds three more acetyl units, and two methyl groups. Sor2 releases an aldehyde, which undergoes spontaneous cyclization resulting in the formation of sorbicillin or 2',3'-dihydrosorbicillin. The monooxygenase sor5 oxidizes sorbicillin and 2',3'-dihydrosorbicillin to 2',3'-dihydrosorbicillinol and sorbicillinol, respectively. The oxidoreductase sor8 further converts sorbicillinol into oxosorbicillinol. Sorbicillinol is the building block for the other sorbicillinoids such as disorbicillinol, bisvertinolon, dihydrobisvertinolone, and dihydrotrichotetronine. The protein is FAD-linked oxidoreductase sor8 of Hypocrea jecorina (strain QM6a) (Trichoderma reesei).